A 66-amino-acid chain; its full sequence is Large ribosomal subunit protein bL33c (66 aa).

It belongs to the bacterial ribosomal protein bL33 family.

The protein resides in the plastid. The protein localises to the chloroplast. This Ceratophyllum demersum (Rigid hornwort) protein is Large ribosomal subunit protein bL33c.